The sequence spans 427 residues: Enolase (427 aa).

A (2R)-2-phosphoglycerate-binding site is contributed by Q163. The active-site Proton donor is E205. Residues D242, E285, and D312 each contribute to the Mg(2+) site. K337, R366, S367, and K388 together coordinate (2R)-2-phosphoglycerate. The active-site Proton acceptor is K337.

It belongs to the enolase family. Requires Mg(2+) as cofactor.

The protein resides in the cytoplasm. Its subcellular location is the secreted. It localises to the cell surface. The enzyme catalyses (2R)-2-phosphoglycerate = phosphoenolpyruvate + H2O. The protein operates within carbohydrate degradation; glycolysis; pyruvate from D-glyceraldehyde 3-phosphate: step 4/5. Functionally, catalyzes the reversible conversion of 2-phosphoglycerate (2-PG) into phosphoenolpyruvate (PEP). It is essential for the degradation of carbohydrates via glycolysis. In Xanthobacter autotrophicus (strain ATCC BAA-1158 / Py2), this protein is Enolase.